The chain runs to 614 residues: Sodium- and chloride-dependent betaine transporter (614 aa).

Over 1–44 (MDRKVTVHEDGCPVVSWVPEEGEMMDQKDKDQVKDRGQWTNKME) the chain is Cytoplasmic. Helical transmembrane passes span 45–65 (FVLS…FPYL), 73–92 (AFFI…VFFL), and 117–137 (GIGM…IIIL). Over 138–210 (AWALFYLFSS…SGIHDLGSLR (73 aa)) the chain is Extracellular. Asn171 and Asn183 each carry an N-linked (GlcNAc...) asparagine glycan. Transmembrane regions (helical) follow at residues 211–229 (WELA…FCIW), 238–255 (VVYF…ILLI), 291–308 (IFFS…LGSY), 320–341 (IALC…FSIL), 374–393 (MPLS…FLGL), 423–441 (LLIL…LLVT), 458–478 (GICL…VYGA), 499–518 (ISWL…FSLS), and 538–556 (IGWL…FIII). The Cytoplasmic segment spans residues 557–614 (TLLKTQGSFKKRLQRLITPDPSLPQPGRRSPQDGSSAQNCSTSPVKQELIAWEKETHL). Positions 574–600 (TPDPSLPQPGRRSPQDGSSAQNCSTSP) are disordered. Ser586 carries the post-translational modification Phosphoserine. Residues 588–600 (QDGSSAQNCSTSP) are compositionally biased toward polar residues.

This sequence belongs to the sodium:neurotransmitter symporter (SNF) (TC 2.A.22) family. SLC6A12 subfamily. Interacts with LIN7C.

The protein localises to the basolateral cell membrane. It localises to the cell membrane. The enzyme catalyses 4-aminobutanoate(out) + chloride(out) + 3 Na(+)(out) = 4-aminobutanoate(in) + chloride(in) + 3 Na(+)(in). It carries out the reaction glycine betaine(out) + 2 chloride(out) + 3 Na(+)(out) = glycine betaine(in) + 2 chloride(in) + 3 Na(+)(in). Transporter that mediates cellular uptake of betaine and GABA in a sodium- and chloride-dependent process. May have a role in regulation of GABAergic transmission in the brain through the reuptake of GABA into presynaptic terminals, as well as in osmotic regulation. Probably also involved in renal and hepatic osmotic regulation. The protein is Sodium- and chloride-dependent betaine transporter (Slc6a12) of Rattus norvegicus (Rat).